Here is a 362-residue protein sequence, read N- to C-terminus: tRNA-specific 2-thiouridylase MnmA 3 (362 aa).

ATP contacts are provided by residues 11 to 18 and M37; that span reads GMSGGIDS. C91 (nucleophile) is an active-site residue. Residues C91 and C188 are joined by a disulfide bond. G115 contributes to the ATP binding site. Residues 137–139 are interaction with tRNA; sequence KDQ. Catalysis depends on C188, which acts as the Cysteine persulfide intermediate. Residues 296–297 form an interaction with tRNA region; the sequence is RY.

Belongs to the MnmA/TRMU family.

It localises to the cytoplasm. It carries out the reaction S-sulfanyl-L-cysteinyl-[protein] + uridine(34) in tRNA + AH2 + ATP = 2-thiouridine(34) in tRNA + L-cysteinyl-[protein] + A + AMP + diphosphate + H(+). Its function is as follows. Catalyzes the 2-thiolation of uridine at the wobble position (U34) of tRNA, leading to the formation of s(2)U34. The sequence is that of tRNA-specific 2-thiouridylase MnmA 3 from Bacteroides fragilis (strain ATCC 25285 / DSM 2151 / CCUG 4856 / JCM 11019 / LMG 10263 / NCTC 9343 / Onslow / VPI 2553 / EN-2).